The sequence spans 1127 residues: DNA-directed RNA polymerase I subunit RPA2 homolog (1127 aa).

Residue Ser-1025 is modified to Phosphoserine.

The protein belongs to the RNA polymerase beta chain family. In terms of assembly, component of the RNA polymerase I (Pol I) complex consisting of at least 13 subunits.

Its subcellular location is the nucleus. The protein resides in the nucleolus. The catalysed reaction is RNA(n) + a ribonucleoside 5'-triphosphate = RNA(n+1) + diphosphate. Its activity is regulated as follows. Antisense ribosomal siRNAs silence rRNA expression during the elongation phase by decreasing rpoa-2 occupancy downstream of the RNAi-targeted region in nrde-2-dependent manner. In terms of biological role, DNA-dependent RNA polymerase catalyzes the transcription of DNA into RNA using the four ribonucleoside triphosphates as substrates. Second largest core component of RNA polymerase I which synthesizes ribosomal RNA precursors. Proposed to contribute to the polymerase catalytic activity and forms the polymerase active center together with the largest subunit. Pol I is composed of mobile elements and RPA2 is part of the core element with the central large cleft and probably a clamp element that moves to open and close the cleft. Specifically binds to 18S, 5.8S and 26S rDNA, but not to 5S rDNA. The sequence is that of DNA-directed RNA polymerase I subunit RPA2 homolog from Caenorhabditis elegans.